A 277-amino-acid polypeptide reads, in one-letter code: Undecaprenyl-diphosphatase (277 aa).

The next 6 membrane-spanning stretches (helical) occupy residues 47–67, 85–105, 108–128, 183–203, 218–238, and 249–269; these read FNII…RGKI, ANLL…ADLI, WLFN…VMLW, AATE…AVYS, VFAV…RALL, and FAWY…FHLI.

This sequence belongs to the UppP family.

The protein localises to the cell inner membrane. The enzyme catalyses di-trans,octa-cis-undecaprenyl diphosphate + H2O = di-trans,octa-cis-undecaprenyl phosphate + phosphate + H(+). In terms of biological role, catalyzes the dephosphorylation of undecaprenyl diphosphate (UPP). Confers resistance to bacitracin. The polypeptide is Undecaprenyl-diphosphatase (Pseudomonas aeruginosa (strain UCBPP-PA14)).